Reading from the N-terminus, the 426-residue chain is Glutamate-1-semialdehyde 2,1-aminomutase (426 aa).

K265 carries the post-translational modification N6-(pyridoxal phosphate)lysine.

The protein belongs to the class-III pyridoxal-phosphate-dependent aminotransferase family. HemL subfamily. In terms of assembly, homodimer. The cofactor is pyridoxal 5'-phosphate.

It localises to the cytoplasm. The catalysed reaction is (S)-4-amino-5-oxopentanoate = 5-aminolevulinate. The protein operates within porphyrin-containing compound metabolism; protoporphyrin-IX biosynthesis; 5-aminolevulinate from L-glutamyl-tRNA(Glu): step 2/2. The sequence is that of Glutamate-1-semialdehyde 2,1-aminomutase (hemL) from Salmonella typhimurium (strain SL1344).